We begin with the raw amino-acid sequence, 132 residues long: Chemokine-like protein TAFA-5 (132 aa).

The signal sequence occupies residues 1–43 (MAPSPRTGSRQDATALPSMSSTFWAFMILASLLIAYCSQLAAG). An N-linked (GlcNAc...) asparagine glycan is attached at Asn-113.

It belongs to the TAFA family.

Its subcellular location is the secreted. Acts as a chemokine-like protein by regulating cell proliferation and migration through activation of G protein-coupled receptors (GPCRs), such as S1PR2 and FPR2. Stimulates chemotactic migration of macrophages mediated by the MAPK3/ERK1 and AKT1 pathway. Blocks TNFSF11/RANKL-induced osteoclast formation from macrophages by inhibiting up-regulation of osteoclast fusogenic and differentiation genes. Stimulation of macrophage migration and inhibition of osteoclast formation is mediated through the GPCR FPR2. Acts as an adipokine by negatively regulating vascular smooth muscle cell (VSMC) proliferation and migration in response to platelet-derived growth factor stimulation via GPCR S1PR2 and G protein GNA12/GNA13-transmitted RHOA signaling. Inhibits injury-induced cell proliferation and neointima formation in the femoral arteries. The sequence is that of Chemokine-like protein TAFA-5 (TAFA5) from Bos taurus (Bovine).